The chain runs to 119 residues: Large ribosomal subunit protein uL18 (119 aa).

Belongs to the universal ribosomal protein uL18 family. As to quaternary structure, part of the 50S ribosomal subunit; part of the 5S rRNA/L5/L18/L25 subcomplex. Contacts the 5S and 23S rRNAs.

Functionally, this is one of the proteins that bind and probably mediate the attachment of the 5S RNA into the large ribosomal subunit, where it forms part of the central protuberance. This is Large ribosomal subunit protein uL18 from Dinoroseobacter shibae (strain DSM 16493 / NCIMB 14021 / DFL 12).